The following is a 108-amino-acid chain: Colipase B (108 aa).

The first 13 residues, 1–13 (LALLLVALAVAYA), serve as a signal peptide directing secretion. Residues 14–18 (VPDPR) constitute a propeptide, enterostatin, activation peptide. 5 disulfides stabilise this stretch: C30–C41, C36–C52, C40–C74, C62–C82, and C76–C100. Taurodeoxycholate is bound at residue W65.

It belongs to the colipase family. Forms a 1:1 stoichiometric complex with pancreatic lipase. In terms of tissue distribution, expressed by the pancreas.

The protein localises to the secreted. Functionally, colipase is a cofactor of pancreatic lipase. It allows the lipase to anchor itself to the lipid-water interface. Without colipase the enzyme is washed off by bile salts, which have an inhibitory effect on the lipase. Enterostatin has a biological activity as a satiety signal. The polypeptide is Colipase B (CLPS2) (Equus caballus (Horse)).